The sequence spans 404 residues: Probable tRNA sulfurtransferase (404 aa).

In terms of domain architecture, THUMP spans 60–165 (EEVIPKLSKV…KDAAYLSYET (106 aa)). Residues 183–184 (ML), 208–209 (HF), arginine 265, glycine 287, and glutamine 296 contribute to the ATP site.

Belongs to the ThiI family.

It is found in the cytoplasm. The catalysed reaction is [ThiI sulfur-carrier protein]-S-sulfanyl-L-cysteine + a uridine in tRNA + 2 reduced [2Fe-2S]-[ferredoxin] + ATP + H(+) = [ThiI sulfur-carrier protein]-L-cysteine + a 4-thiouridine in tRNA + 2 oxidized [2Fe-2S]-[ferredoxin] + AMP + diphosphate. It carries out the reaction [ThiS sulfur-carrier protein]-C-terminal Gly-Gly-AMP + S-sulfanyl-L-cysteinyl-[cysteine desulfurase] + AH2 = [ThiS sulfur-carrier protein]-C-terminal-Gly-aminoethanethioate + L-cysteinyl-[cysteine desulfurase] + A + AMP + 2 H(+). Its pathway is cofactor biosynthesis; thiamine diphosphate biosynthesis. Functionally, catalyzes the ATP-dependent transfer of a sulfur to tRNA to produce 4-thiouridine in position 8 of tRNAs, which functions as a near-UV photosensor. Also catalyzes the transfer of sulfur to the sulfur carrier protein ThiS, forming ThiS-thiocarboxylate. This is a step in the synthesis of thiazole, in the thiamine biosynthesis pathway. The sulfur is donated as persulfide by IscS. This Enterococcus faecalis (strain ATCC 700802 / V583) protein is Probable tRNA sulfurtransferase.